The sequence spans 348 residues: Protein RecA (348 aa).

Residue 67-74 coordinates ATP; sequence GPESSGKT.

Belongs to the RecA family.

The protein localises to the cytoplasm. In terms of biological role, can catalyze the hydrolysis of ATP in the presence of single-stranded DNA, the ATP-dependent uptake of single-stranded DNA by duplex DNA, and the ATP-dependent hybridization of homologous single-stranded DNAs. It interacts with LexA causing its activation and leading to its autocatalytic cleavage. This Kineococcus radiotolerans (strain ATCC BAA-149 / DSM 14245 / SRS30216) protein is Protein RecA.